The primary structure comprises 418 residues: MAARLPACVVDCGTGYTKLGYAGNTEPQFIIPSCIAIKESAKVGDQAQRRLMKGVDDLDFHIGDEAIDKPTYATKWPIRHGIVEDWDLMERFMEQVIFKYLRAEPEDHYFLLTEPPLNTPENREYTAEIMFESFNVPGLYIAVQAVLALAASWTSRQVGERTLTGTVIDSGDGVTHVIPVAEGYVIGSCIKHIPIAGRDITYFTQQLLRDREVGIPPEQSLETAKAVKERFSYVCPDLVKEFSKYDTDGAKWIKQYTGVNAVSKKEFSIDVGYERFLGPEIFFHPEFANPDFTQPISEVVDEVIQNCPIDVRRPLYKNIVLSGGSTMFRDFGRRLQRDVKRTVDARLKLSEELSGGRLKPKPIDVQVITHHMQRYAVWFGGSMLASTPEFYQVCHTKKDYEEIGPSICRHNPVFGVMS.

This sequence belongs to the actin family. ARP3 subfamily. As to quaternary structure, component of the Arp2/3 complex composed of actr2/arp2, actr3/arp3, arpc1 (arpc1a or arpc1b), arpc2, arpc3, arpc4 and arpc5.

The protein localises to the cytoplasm. It is found in the cytoskeleton. The protein resides in the cell projection. It localises to the nucleus. In terms of biological role, ATP-binding component of the Arp2/3 complex, a multiprotein complex that mediates actin polymerization upon stimulation by nucleation-promoting factor (NPF). The Arp2/3 complex mediates the formation of branched actin networks in the cytoplasm, providing the force for cell motility. Seems to contact the pointed end of the daughter actin filament. In addition to its role in the cytoplasmic cytoskeleton, the Arp2/3 complex also promotes actin polymerization in the nucleus, thereby regulating gene transcription and repair of damaged DNA. The Arp2/3 complex promotes homologous recombination (HR) repair in response to DNA damage by promoting nuclear actin polymerization, leading to drive motility of double-strand breaks (DSBs). This Xenopus laevis (African clawed frog) protein is Actin-related protein 3-B (actr3-b).